A 317-amino-acid polypeptide reads, in one-letter code: uncharacterized protein (317 aa).

At methionine 1–arginine 13 the chain is on the cytoplasmic side. Residues phenylalanine 14–tyrosine 34 traverse the membrane as a helical segment. At glycine 35–glycine 49 the chain is on the extracellular side. N-linked (GlcNAc...) asparagine glycosylation occurs at asparagine 43. A helical transmembrane segment spans residues valine 50–isoleucine 70. Position 71 (tyrosine 71) is a topological domain, cytoplasmic. Residues isoleucine 72 to valine 92 traverse the membrane as a helical segment. Residues leucine 93 to alanine 133 lie on the Extracellular side of the membrane. Residue asparagine 129 is glycosylated (N-linked (GlcNAc...) asparagine). Residues alanine 134–isoleucine 154 form a helical membrane-spanning segment. At asparagine 155 to proline 317 the chain is on the cytoplasmic side. Residues arginine 204 to proline 317 form a disordered region. Over residues threonine 239–threonine 250 the composition is skewed to low complexity. Residues arginine 256–aspartate 282 are compositionally biased toward polar residues. Basic and acidic residues predominate over residues serine 284 to glutamate 295. Positions methionine 302 to proline 317 are enriched in polar residues.

The protein localises to the membrane. This is an uncharacterized protein from Saccharomyces cerevisiae (strain ATCC 204508 / S288c) (Baker's yeast).